A 133-amino-acid polypeptide reads, in one-letter code: Small ribosomal subunit protein uS8 (133 aa).

It belongs to the universal ribosomal protein uS8 family. Part of the 30S ribosomal subunit. Contacts proteins S5 and S12.

Its function is as follows. One of the primary rRNA binding proteins, it binds directly to 16S rRNA central domain where it helps coordinate assembly of the platform of the 30S subunit. In Deinococcus geothermalis (strain DSM 11300 / CIP 105573 / AG-3a), this protein is Small ribosomal subunit protein uS8.